A 511-amino-acid chain; its full sequence is Histidine ammonia-lyase (511 aa).

Residues 143–145 (ASG) constitute a cross-link (5-imidazolinone (Ala-Gly)). Ser144 is subject to 2,3-didehydroalanine (Ser).

It belongs to the PAL/histidase family. Post-translationally, contains an active site 4-methylidene-imidazol-5-one (MIO), which is formed autocatalytically by cyclization and dehydration of residues Ala-Ser-Gly.

Its subcellular location is the cytoplasm. It catalyses the reaction L-histidine = trans-urocanate + NH4(+). Its pathway is amino-acid degradation; L-histidine degradation into L-glutamate; N-formimidoyl-L-glutamate from L-histidine: step 1/3. The chain is Histidine ammonia-lyase from Idiomarina loihiensis (strain ATCC BAA-735 / DSM 15497 / L2-TR).